A 371-amino-acid chain; its full sequence is Carbamoyl phosphate synthase small chain (371 aa).

A CPSase region spans residues 1-182 (MGVHKKGYLV…KNPIVHTPKN (182 aa)). 3 residues coordinate L-glutamine: Ser49, Gly235, and Gly237. Residues 186–371 (RVVVLDLGVK…EFVKILEGRK (186 aa)) enclose the Glutamine amidotransferase type-1 domain. The active-site Nucleophile is Cys263. Leu264, Gln267, Asn305, Gly307, and Tyr308 together coordinate L-glutamine. Active-site residues include His346 and Glu348.

This sequence belongs to the CarA family. Composed of two chains; the small (or glutamine) chain promotes the hydrolysis of glutamine to ammonia, which is used by the large (or ammonia) chain to synthesize carbamoyl phosphate. Tetramer of heterodimers (alpha,beta)4.

It catalyses the reaction hydrogencarbonate + L-glutamine + 2 ATP + H2O = carbamoyl phosphate + L-glutamate + 2 ADP + phosphate + 2 H(+). It carries out the reaction L-glutamine + H2O = L-glutamate + NH4(+). It functions in the pathway amino-acid biosynthesis; L-arginine biosynthesis; carbamoyl phosphate from bicarbonate: step 1/1. The protein operates within pyrimidine metabolism; UMP biosynthesis via de novo pathway; (S)-dihydroorotate from bicarbonate: step 1/3. In terms of biological role, small subunit of the glutamine-dependent carbamoyl phosphate synthetase (CPSase). CPSase catalyzes the formation of carbamoyl phosphate from the ammonia moiety of glutamine, carbonate, and phosphate donated by ATP, constituting the first step of 2 biosynthetic pathways, one leading to arginine and/or urea and the other to pyrimidine nucleotides. The small subunit (glutamine amidotransferase) binds and cleaves glutamine to supply the large subunit with the substrate ammonia. This chain is Carbamoyl phosphate synthase small chain, found in Pyrococcus furiosus (strain ATCC 43587 / DSM 3638 / JCM 8422 / Vc1).